The following is an 89-amino-acid chain: Small ribosomal subunit protein uS15 (89 aa).

The protein belongs to the universal ribosomal protein uS15 family. Part of the 30S ribosomal subunit. Forms a bridge to the 50S subunit in the 70S ribosome, contacting the 23S rRNA.

Functionally, one of the primary rRNA binding proteins, it binds directly to 16S rRNA where it helps nucleate assembly of the platform of the 30S subunit by binding and bridging several RNA helices of the 16S rRNA. Forms an intersubunit bridge (bridge B4) with the 23S rRNA of the 50S subunit in the ribosome. This is Small ribosomal subunit protein uS15 from Arthrobacter sp. (strain FB24).